Consider the following 355-residue polypeptide: MVADAYGRPLKDLRIAVTPECNLDCFFCHMEGATESGPMRPGSWSPVLSVEDYDIIGEAASRLGVDSFKLTGGEPLIRGDVDKIVAVLARYGEVSMTTNGILLPLKASSLKRAGLARVNVSLHSISEEVYEKITRRRAVKLALKGVEAALKAGLRVKVNMVLLRGLNEGEFWRLLRLAEDLGFDLQVIEVHPAGRGRKVLSSFRRPIDVVEERLSSMAVAVETGRLHNRRVYRLPSGVRVYLVDPVENPVFCMGCYRVRLTWDGRLLPCIYWKGPYPSVAEALKRGGSREEKVWRVMKILLEANALRRPTYLFRLHDGQEPQAPSTGRGLRLTLPGKAKAERLAYSTLKAPLIEG.

One can recognise a Radical SAM core domain in the interval 5–233 (AYGRPLKDLR…GRLHNRRVYR (229 aa)). Arginine 14 contacts GTP. Cysteine 21, cysteine 25, and cysteine 28 together coordinate [4Fe-4S] cluster. Lysine 69 contributes to the GTP binding site. S-adenosyl-L-methionine is bound at residue glycine 73. Threonine 97 is a GTP binding site. Residue serine 121 coordinates S-adenosyl-L-methionine. Lysine 157 lines the GTP pocket. 2 residues coordinate [4Fe-4S] cluster: cysteine 252 and cysteine 255. 257 to 259 (RVR) contributes to the GTP binding site. Cysteine 269 is a binding site for [4Fe-4S] cluster.

The protein belongs to the radical SAM superfamily. MoaA family. [4Fe-4S] cluster serves as cofactor.

The enzyme catalyses GTP + AH2 + S-adenosyl-L-methionine = (8S)-3',8-cyclo-7,8-dihydroguanosine 5'-triphosphate + 5'-deoxyadenosine + L-methionine + A + H(+). It functions in the pathway cofactor biosynthesis; molybdopterin biosynthesis. In terms of biological role, catalyzes the cyclization of GTP to (8S)-3',8-cyclo-7,8-dihydroguanosine 5'-triphosphate. This is Probable GTP 3',8-cyclase from Aeropyrum pernix (strain ATCC 700893 / DSM 11879 / JCM 9820 / NBRC 100138 / K1).